We begin with the raw amino-acid sequence, 532 residues long: Nitrogenase molybdenum-iron protein alpha chain (532 aa).

[8Fe-7S] cluster contacts are provided by cysteine 62, cysteine 88, and cysteine 153. 2 residues coordinate [7Fe-Mo-9S-C-homocitryl] cluster: cysteine 271 and histidine 489.

It belongs to the NifD/NifK/NifE/NifN family. Tetramer of two alpha and two beta chains. Forms complex with the iron protein (nitrogenase component 2). The cofactor is [8Fe-7S] cluster. [7Fe-Mo-9S-C-homocitryl] cluster serves as cofactor.

It catalyses the reaction N2 + 8 reduced [2Fe-2S]-[ferredoxin] + 16 ATP + 16 H2O = H2 + 8 oxidized [2Fe-2S]-[ferredoxin] + 2 NH4(+) + 16 ADP + 16 phosphate + 6 H(+). In terms of biological role, this molybdenum-iron protein is part of the nitrogenase complex that catalyzes the key enzymatic reactions in nitrogen fixation. The polypeptide is Nitrogenase molybdenum-iron protein alpha chain (nifD2) (Methanosarcina barkeri).